Consider the following 360-residue polypeptide: MRIKEHLKQLKPYQPGKPIEAVKSEYGLDKVVKLASNENPYGCSEAAKEALHHEIQQLALYPDGYSAALRTRLSKHLNVSETSLIFGNGSDEIIQIICRAFLNNKTNTITAAPTFPQYKHNAVIEGAEVREIALRPDGSHDLDAMLEAIDEQTQVVWICSPNNPTGTYTSEGELLAFLERVPSRVLVVLDEAYYEYVTAEDYPETVPLLSKYSNLMILRTFSKAYGLAALRVGYGIADENLIRQIEPAREPFNTSRLGQAAAIAALDDQAFIASCVEQNNAGLQQYYDFAKTHGLKCYPSQTNFVLIDFKRPADELFQALLEKGYIVRSGNALGFPTSLRITIGTKEQNEEILAILAEIL.

The residue at position 223 (lysine 223) is an N6-(pyridoxal phosphate)lysine.

This sequence belongs to the class-II pyridoxal-phosphate-dependent aminotransferase family. Histidinol-phosphate aminotransferase subfamily. In terms of assembly, homodimer. Pyridoxal 5'-phosphate is required as a cofactor.

The catalysed reaction is L-histidinol phosphate + 2-oxoglutarate = 3-(imidazol-4-yl)-2-oxopropyl phosphate + L-glutamate. The protein operates within amino-acid biosynthesis; L-histidine biosynthesis; L-histidine from 5-phospho-alpha-D-ribose 1-diphosphate: step 7/9. The protein is Histidinol-phosphate aminotransferase of Bacillus subtilis subsp. natto.